Here is a 203-residue protein sequence, read N- to C-terminus: Small ribosomal subunit protein uS4 (203 aa).

Positions 93 to 156 (RRLDNVVYRL…MKVPAILEAV (64 aa)) constitute an S4 RNA-binding domain.

It belongs to the universal ribosomal protein uS4 family. As to quaternary structure, part of the 30S ribosomal subunit. Contacts protein S5. The interaction surface between S4 and S5 is involved in control of translational fidelity.

In terms of biological role, one of the primary rRNA binding proteins, it binds directly to 16S rRNA where it nucleates assembly of the body of the 30S subunit. Functionally, with S5 and S12 plays an important role in translational accuracy. In Streptococcus equi subsp. equi (strain 4047), this protein is Small ribosomal subunit protein uS4.